A 104-amino-acid polypeptide reads, in one-letter code: Flagellar hook-basal body complex protein FliE (104 aa).

Belongs to the FliE family.

Its subcellular location is the bacterial flagellum basal body. The protein is Flagellar hook-basal body complex protein FliE of Enterobacter sp. (strain 638).